The following is a 75-amino-acid chain: ORF2p protein (75 aa).

Residues 13–18 (WIGHPV) form an important for viral replication in intestinal cells region. The segment at 23–45 (IVYLFVGFTPLTLETLHTLNYII) is a transmembrane helix. Residues 53 to 75 (APRSPHSDPARMRIPTQPRKAPL) are disordered.

It is found in the host cytoplasmic vesicle membrane. In terms of biological role, facilitates virus release from intestinal cells in vitro, possibly through the host autophagic pathway. This is ORF2p protein from Human enterovirus 71 (strain USA/BrCr/1970) (EV71).